The primary structure comprises 295 residues: UDP-N-acetylenolpyruvoylglucosamine reductase (295 aa).

In terms of domain architecture, FAD-binding PCMH-type spans 23 to 188 (QVGGPADFLA…ISAKFALKPG (166 aa)). Residue R167 is part of the active site. The active-site Proton donor is the S217. E287 is a catalytic residue.

Belongs to the MurB family. FAD is required as a cofactor.

It is found in the cytoplasm. The catalysed reaction is UDP-N-acetyl-alpha-D-muramate + NADP(+) = UDP-N-acetyl-3-O-(1-carboxyvinyl)-alpha-D-glucosamine + NADPH + H(+). It functions in the pathway cell wall biogenesis; peptidoglycan biosynthesis. Its function is as follows. Cell wall formation. The sequence is that of UDP-N-acetylenolpyruvoylglucosamine reductase from Streptococcus equi subsp. zooepidemicus (strain H70).